A 484-amino-acid chain; its full sequence is N-succinylglutamate 5-semialdehyde dehydrogenase (484 aa).

An NAD(+)-binding site is contributed by 221–226 (GSAAAG). Catalysis depends on residues E244 and C278.

The protein belongs to the aldehyde dehydrogenase family. AstD subfamily.

The enzyme catalyses N-succinyl-L-glutamate 5-semialdehyde + NAD(+) + H2O = N-succinyl-L-glutamate + NADH + 2 H(+). The protein operates within amino-acid degradation; L-arginine degradation via AST pathway; L-glutamate and succinate from L-arginine: step 4/5. Catalyzes the NAD-dependent reduction of succinylglutamate semialdehyde into succinylglutamate. This Caulobacter sp. (strain K31) protein is N-succinylglutamate 5-semialdehyde dehydrogenase.